Reading from the N-terminus, the 856-residue chain is Envelope glycoprotein gp160 (856 aa).

The N-terminal stretch at 1 to 31 (MRVEGIQRNWKQWWIWGILGFWMVMIYNVRG) is a signal peptide. Topologically, residues 32–677 (NLWVTVYYGV…ITNWLWYIKI (646 aa)) are extracellular. Cys53 and Cys73 are oxidised to a cystine. Residues Asn87, Asn132, Asn139, Asn150, Asn154, Asn180, Asn184, Asn195, Asn228, Asn232, Asn239, Asn260, Asn274, Asn287, Asn293, Asn299, Asn329, and Asn336 are each glycosylated (N-linked (GlcNAc...) asparagine; by host). 5 disulfides stabilise this stretch: Cys118/Cys203, Cys125/Cys194, Cys130/Cys151, Cys216/Cys245, and Cys226/Cys237. Positions 130–150 (CSNRTIDYNNRTDNMGGEIKN) are V1. Residues 151 to 194 (CSFNMTTEVRDKREKVHALFYRLDIVPLKNESSNTSGDYRLINC) form a V2 region. A V3 region spans residues 294-327 (CTRPNNNTRKSIRIGPGQAFYATGEIIGDIRQAH). A disulfide bridge links Cys294 with Cys328. Positions 360 to 370 (HSGGDLEITTH) are CD4-binding loop. 2 cysteine pairs are disulfide-bonded: Cys374/Cys438 and Cys381/Cys411. The interval 381-411 (CNTSSLFNSTYTPNSTENITGTENSIITIPC) is V4. 5 N-linked (GlcNAc...) asparagine; by host glycosylation sites follow: Asn382, Asn388, Asn394, Asn398, and Asn441. 2 V5 regions span residues 454-464 (GMHDTEIFRPE) and 456-464 (HDTEIFRPE). A fusion peptide region spans residues 505–525 (AVGIGAVFLGFLGAAGSTMGA). An immunosuppression region spans residues 567-585 (KQLQTRVLAIERYLRDQQL). A disulfide bridge links Cys591 with Cys597. 4 N-linked (GlcNAc...) asparagine; by host glycosylation sites follow: Asn604, Asn609, Asn618, and Asn630. Positions 626–660 (REISNYTNTIYRLLEDSQNQQEKNEQDLLALDKWQ) form a coiled coil. Residues 655–676 (ALDKWQNLWTWFGITNWLWYIK) are MPER; binding to GalCer. Residues 678-698 (FIKIVGGLIGLRIIFAVLSIV) traverse the membrane as a helical segment. Topologically, residues 699–856 (NRVRQGYSPL…IRQGFEAALQ (158 aa)) are cytoplasmic. A YXXL motif; contains endocytosis signal motif is present at residues 705–708 (YSPL). Residues 712-732 (TLTPNPRGPDRLGGIEEEGGE) form a disordered region. The S-palmitoyl cysteine; by host moiety is linked to residue Cys757.

The protein belongs to the HIV-1 env protein family. As to quaternary structure, the mature envelope protein (Env) consists of a homotrimer of non-covalently associated gp120-gp41 heterodimers. The resulting complex protrudes from the virus surface as a spike. There seems to be as few as 10 spikes on the average virion. Interacts with host CD4, CCR5 and CXCR4. Gp120 also interacts with the C-type lectins CD209/DC-SIGN and CLEC4M/DC-SIGNR (collectively referred to as DC-SIGN(R)). Gp120 and gp41 interact with GalCer. Gp120 interacts with host ITGA4/ITGB7 complex; on CD4+ T-cells, this interaction results in rapid activation of integrin ITGAL/LFA-1, which facilitates efficient cell-to-cell spreading of HIV-1. Gp120 interacts with cell-associated heparan sulfate; this interaction increases virus infectivity on permissive cells and may be involved in infection of CD4- cells. The mature envelope protein (Env) consists of a homotrimer of non-covalently associated gp120-gp41 heterodimers. The resulting complex protrudes from the virus surface as a spike. There seems to be as few as 10 spikes on the average virion. Highly glycosylated by host. The high number of glycan on the protein is reffered to as 'glycan shield' because it contributes to hide protein sequence from adaptive immune system. In terms of processing, palmitoylation of the transmembrane protein and of Env polyprotein (prior to its proteolytic cleavage) is essential for their association with host cell membrane lipid rafts. Palmitoylation is therefore required for envelope trafficking to classical lipid rafts, but not for viral replication. Post-translationally, specific enzymatic cleavages in vivo yield mature proteins. Envelope glycoproteins are synthesized as an inactive precursor that is heavily N-glycosylated and processed likely by host cell furin in the Golgi to yield the mature SU and TM proteins. The cleavage site between SU and TM requires the minimal sequence [KR]-X-[KR]-R. About 2 of the 9 disulfide bonds of gp41 are reduced by P4HB/PDI, following binding to CD4 receptor.

The protein localises to the virion membrane. It is found in the host cell membrane. The protein resides in the host endosome membrane. Its function is as follows. Oligomerizes in the host endoplasmic reticulum into predominantly trimers. In a second time, gp160 transits in the host Golgi, where glycosylation is completed. The precursor is then proteolytically cleaved in the trans-Golgi and thereby activated by cellular furin or furin-like proteases to produce gp120 and gp41. Functionally, attaches the virus to the host lymphoid cell by binding to the primary receptor CD4. This interaction induces a structural rearrangement creating a high affinity binding site for a chemokine coreceptor like CXCR4 and/or CCR5. Acts as a ligand for CD209/DC-SIGN and CLEC4M/DC-SIGNR, which are respectively found on dendritic cells (DCs), and on endothelial cells of liver sinusoids and lymph node sinuses. These interactions allow capture of viral particles at mucosal surfaces by these cells and subsequent transmission to permissive cells. HIV subverts the migration properties of dendritic cells to gain access to CD4+ T-cells in lymph nodes. Virus transmission to permissive T-cells occurs either in trans (without DCs infection, through viral capture and transmission), or in cis (following DCs productive infection, through the usual CD4-gp120 interaction), thereby inducing a robust infection. In trans infection, bound virions remain infectious over days and it is proposed that they are not degraded, but protected in non-lysosomal acidic organelles within the DCs close to the cell membrane thus contributing to the viral infectious potential during DCs' migration from the periphery to the lymphoid tissues. On arrival at lymphoid tissues, intact virions recycle back to DCs' cell surface allowing virus transmission to CD4+ T-cells. Acts as a class I viral fusion protein. Under the current model, the protein has at least 3 conformational states: pre-fusion native state, pre-hairpin intermediate state, and post-fusion hairpin state. During fusion of viral and target intracellular membranes, the coiled coil regions (heptad repeats) assume a trimer-of-hairpins structure, positioning the fusion peptide in close proximity to the C-terminal region of the ectodomain. The formation of this structure appears to drive apposition and subsequent fusion of viral and target cell membranes. Complete fusion occurs in host cell endosomes and is dynamin-dependent, however some lipid transfer might occur at the plasma membrane. The virus undergoes clathrin-dependent internalization long before endosomal fusion, thus minimizing the surface exposure of conserved viral epitopes during fusion and reducing the efficacy of inhibitors targeting these epitopes. Membranes fusion leads to delivery of the nucleocapsid into the cytoplasm. This Homo sapiens (Human) protein is Envelope glycoprotein gp160.